The following is a 443-amino-acid chain: ATP-dependent protease ATPase subunit HslU (443 aa).

Residues I18 and G60 to E65 each bind ATP. The interval D141–E165 is disordered. Residues D256, E321, and R393 each contribute to the ATP site.

It belongs to the ClpX chaperone family. HslU subfamily. In terms of assembly, a double ring-shaped homohexamer of HslV is capped on each side by a ring-shaped HslU homohexamer. The assembly of the HslU/HslV complex is dependent on binding of ATP.

It localises to the cytoplasm. Its function is as follows. ATPase subunit of a proteasome-like degradation complex; this subunit has chaperone activity. The binding of ATP and its subsequent hydrolysis by HslU are essential for unfolding of protein substrates subsequently hydrolyzed by HslV. HslU recognizes the N-terminal part of its protein substrates and unfolds these before they are guided to HslV for hydrolysis. This Photobacterium profundum (strain SS9) protein is ATP-dependent protease ATPase subunit HslU.